We begin with the raw amino-acid sequence, 397 residues long: Elongation factor Tu (397 aa).

One can recognise a tr-type G domain in the interval lysine 10–glutamine 207. Residues glycine 19–threonine 26 form a G1 region. Glycine 19–threonine 26 contributes to the GTP binding site. Threonine 26 is a Mg(2+) binding site. The interval glycine 60–alanine 64 is G2. The G3 stretch occupies residues aspartate 81–glycine 84. GTP is bound by residues aspartate 81–histidine 85 and asparagine 136–aspartate 139. The interval asparagine 136–aspartate 139 is G4. The G5 stretch occupies residues serine 174–leucine 176.

This sequence belongs to the TRAFAC class translation factor GTPase superfamily. Classic translation factor GTPase family. EF-Tu/EF-1A subfamily. In terms of assembly, monomer.

It is found in the cytoplasm. It catalyses the reaction GTP + H2O = GDP + phosphate + H(+). Its function is as follows. GTP hydrolase that promotes the GTP-dependent binding of aminoacyl-tRNA to the A-site of ribosomes during protein biosynthesis. In Lawsonia intracellularis (strain PHE/MN1-00), this protein is Elongation factor Tu.